Consider the following 411-residue polypeptide: MTPNSMTENGLPAWDKPKPCPDGEPEWKLVGMSEACLHRKSHPERRGPLKHEQSPLIQASWTSSIFHLDHDDVSDQSAPSAQAFQTEEKKCKGYIPSYLDKDELCVVCGDKATGYHYRCITCEGCKGFFRRTIQKNLHPSYSCKYEGKCVIDKVTRNQCQECRFKKCIYVGMATDLVLDDSKRLAKRKLIEENREKRRREELQRSMGHKPEPTDQEWELIKTVTEAHVATNAQGSHWKQKRKFLPEDIGQAPIVNAPEGGKVDLEAFSHFTKIITPAITRVVDFAKKLPMFCELPCEDQIILLKGCCMEIMSLRAAVRYDPESETLTLNGEMAVTRRQLKNGGLGVVSDAIFDLGMSLSSFNLDDTEVALLQAVLLMSSDRPGLACVERIEKYQDSFLLAFEHYINYRRNS.

The disordered stretch occupies residues 1–24 (MTPNSMTENGLPAWDKPKPCPDGE). Positions 1–104 (MTPNSMTENG…IPSYLDKDEL (104 aa)) are modulating. Residues 15 to 24 (DKPKPCPDGE) are compositionally biased toward basic and acidic residues. Zn(2+) is bound by residues Cys-105, Cys-108, Cys-122, Cys-125, Cys-143, Cys-149, Cys-159, and Cys-162. 2 NR C4-type zinc fingers span residues 105-125 (CVVCGDKATGYHYRCITCEGC) and 143-167 (CKYEGKCVIDKVTRNQCQECRFKKC). Residues 105 to 179 (CVVCGDKATG…VGMATDLVLD (75 aa)) constitute a DNA-binding region (nuclear receptor). The NR LBD domain maps to 215-411 (QEWELIKTVT…EHYINYRRNS (197 aa)). The tract at residues 242 to 411 (KFLPEDIGQA…EHYINYRRNS (170 aa)) is interaction with NR2F6. Residues Arg-280 and Asn-329 each contribute to the 3,3',5-triiodo-L-thyronine site. L-thyroxine contacts are provided by Arg-280 and Asn-329.

The protein belongs to the nuclear hormone receptor family. NR1 subfamily. As to quaternary structure, binds DNA as a dimer; homodimer and heterodimer with RXRA. Interacts with the coactivators NCOA1/SRC1, NCOA2/GRIP1, NCOA7 and MED1/TRAP220 in a ligand-inducible manner. Interacts with the corepressor NCOR1 in absence of ligand. Interacts with C1D. Interacts with NR2F6; the interaction impairs the binding of the THRB homodimer and THRB:RXRB heterodimer to T3 response elements. Interacts with PRMT2 and THRSP. Interacts with TACC1; this interaction is decreased in the presence of thyroid hormone T3.

Its subcellular location is the nucleus. Nuclear hormone receptor that can act as a repressor or activator of transcription. High affinity receptor for thyroid hormones, including triiodothyronine and thyroxine. The protein is Thyroid hormone receptor beta (THRB) of Ovis aries (Sheep).